Reading from the N-terminus, the 388-residue chain is Protein RecA (388 aa).

ATP is bound at residue 79-86 (GPESSGKT). The segment at 347-372 (IDGEEVSEQDTENKKDEPKKEEAVNE) is disordered. Positions 357 to 369 (TENKKDEPKKEEA) are enriched in basic and acidic residues.

The protein belongs to the RecA family.

The protein localises to the cytoplasm. Can catalyze the hydrolysis of ATP in the presence of single-stranded DNA, the ATP-dependent uptake of single-stranded DNA by duplex DNA, and the ATP-dependent hybridization of homologous single-stranded DNAs. It interacts with LexA causing its activation and leading to its autocatalytic cleavage. The chain is Protein RecA from Streptococcus pneumoniae (strain CGSP14).